Reading from the N-terminus, the 7079-residue chain is Replicase polyprotein 1ab (7079 aa).

In terms of domain architecture, CoV Nsp1 globular spans 12–127; that stretch reads THVQLSLPVL…YRNVLLRKNG (116 aa). One can recognise a BetaCoV Nsp1 C-terminal domain in the interval 148 to 179; the sequence is ELGTDPIEDYEQNWNTKHGGGVLRELIRELNG. In terms of domain architecture, CoV Nsp2 N-terminal spans 183-456; sequence TRYVDNNFCG…NEDLMEILNR (274 aa). Residues cysteine 200, cysteine 231, histidine 234, histidine 236, cysteine 323, cysteine 326, cysteine 341, cysteine 344, cysteine 370, cysteine 373, histidine 382, and cysteine 416 each coordinate Zn(2+). The segment at 200–236 is C2H2; sequence CIKDLLARAGKSMCTLSEQLDYIESKRGVYCCREHEH. Positions 323 to 344 are C4; sequence CNHCDEVSWQTCDFLKATCEQC. Residues 370–416 form a C2HC region; it reads CPACQDPEVGPEHSVADYHNHSNIETRLRKGGRTKCFGGCVFAYVGC. The CoV Nsp2 middle domain maps to 458 to 688; it reads RVNINIVGDF…LDVLNKALEM (231 aa). A CoV Nsp2 C-terminal domain is found at 690-818; it reads IDQVIIAGAK…TNNVFSLKGG (129 aa). One can recognise a Ubiquitin-like 1 domain in the interval 822 to 930; sequence KGVTFGEDTV…MYCSFYPPDE (109 aa). 3 Macro domains span residues 1001 to 1167, 1213 to 1341, and 1349 to 1476; these read VNQF…LGYL, KFKA…LPSK, and ILGT…TSSS. The DPUP domain occupies 1478–1544; sequence TSEEHFIETV…LLDKLKSLLS (67 aa). In terms of domain architecture, Ubiquitin-like 2 spans 1548–1603; the sequence is VRTIKVFTTVDNTNLHTQIVDMSMTYGQQFGPTYLDGADVTKIKPHAKHEGKTFFV. A Peptidase C16 domain is found at 1617–1881; sequence YYHTLDESFL…YTEIQPKLDE (265 aa). Residue cysteine 1657 is the For PL-PRO activity of the active site. The Zn(2+) site is built by cysteine 1735, cysteine 1738, cysteine 1770, and cysteine 1772. The C4-type zinc finger occupies 1735-1772; sequence CKTCGQKSTTLTGVEAVMYMGTLSYEELKTGVTIPCIC. Catalysis depends on for PL-PRO activity residues histidine 1818 and aspartate 1832. One can recognise a Nucleic acid-binding domain in the interval 1894–2004; sequence PIDLVPTQPL…CLWSTKPVET (111 aa). The G2M domain occupies 2029-2138; it reads PTSEEVVENP…LGQAAVTTTN (110 aa). The segment at 2098–2377 is HD1; the sequence is LALGLRTLAT…IFFAFCYYVW (280 aa). A helical membrane pass occupies residues 2209–2229; the sequence is LFTIAMWLLLLSICLGSLIYV. A 3Ecto domain is found at 2230–2300; the sequence is TAAFGVLLSN…QVTISSYKLD (71 aa). 2 disulfides stabilise this stretch: cysteine 2246-cysteine 2274 and cysteine 2265-cysteine 2271. 2 helical membrane-spanning segments follow: residues 2310–2330 and 2357–2377; these read WFLA…SAIM and MAPV…YYVW. The tract at residues 2378–2468 is Y1; it reads KSYVHIMDGC…QFKRPINPTD (91 aa). Residues 2378–2746 form the CoV Nsp3 Y domain; sequence KSYVHIMDGC…ITTKISLKGG (369 aa). Positions 2382, 2387, 2392, 2395, 2428, 2431, 2435, and 2438 each coordinate Zn(2+). The segment at 2382–2395 is ZF1; the sequence is HIMDGCTSSTCMMC. A ZF2 region spans residues 2428-2438; the sequence is CKAHNWNCLNC. Residues 2469–2563 form a Y2 region; it reads QSSYVVDSVA…LLDQALVSDV (95 aa). The segment at 2469–2746 is coV-Y; the sequence is QSSYVVDSVA…ITTKISLKGG (278 aa). The segment at 2564 to 2645 is Y3; that stretch reads GDSTEVSVKM…ECLKLSHHSD (82 aa). Residues 2646–2746 form a Y4 region; it reads LEVTGDSCNN…ITTKISLKGG (101 aa). The next 7 helical transmembrane spans lie at 2761–2781, 2998–3018, 3028–3048, 3060–3080, 3083–3103, 3111–3131, and 3148–3168; these read LLCV…SLSV, PGVF…TPLV, ASVV…YYFM, VVAA…LAPA, FLPG…TNDV, WFAM…VFCI, and VMFN…TFLL. Residues 2761–3168 are HD2; that stretch reads LLCVLAALFC…EEAALCTFLL (408 aa). Residues 3148-3246 form the Nsp4C domain; the sequence is VMFNGVTFST…QTSITSAVLQ (99 aa). One can recognise a Peptidase C30 domain in the interval 3247-3552; that stretch reads SGFRKMAFPS…VRQCSGVTFQ (306 aa). Residues histidine 3287 and cysteine 3391 each act as for 3CL-PRO activity in the active site. A run of 7 helical transmembrane segments spans residues 3570 to 3590, 3592 to 3612, 3618 to 3638, 3665 to 3684, 3691 to 3710, 3734 to 3754, and 3762 to 3782; these read FLTS…FFVY, NAFL…MLLV, FLCL…MVYM, CVMY…RTVY, VWTL…GNSL, IMFL…LLFI, and IMLV…LFCL. Residues 3570-3782 are HD3; it reads FLTSLLILVQ…CCCYFGLFCL (213 aa). One can recognise a RdRp Nsp7 cofactor domain in the interval 3843 to 3925; it reads SKMSDVKCTS…EMLDNRATLQ (83 aa). The 198-residue stretch at 3926–4123 folds into the RdRp Nsp8 cofactor domain; that stretch reads AIASEFSSLP…LRANSAVKLQ (198 aa). Positions 4124 to 4236 constitute a Nsp9 ssRNA-binding domain; that stretch reads NNELSPVALR…GSLAATVRLQ (113 aa). The 139-residue stretch at 4237–4375 folds into the ExoN/MTase coactivator domain; that stretch reads AGNATEVPAN…CDQLREPMMQ (139 aa). 8 residues coordinate Zn(2+): cysteine 4310, cysteine 4313, histidine 4319, cysteine 4326, cysteine 4353, cysteine 4356, cysteine 4364, and cysteine 4366. Zinc fingers lie at residues 4310–4326 and 4353–4366; these read CLYC…KGFC and CTVC…GCSC. In terms of domain architecture, NiRAN spans 4382–4636; the sequence is FLNRVCGVSA…AAESHMDADL (255 aa). Residues asparagine 4584 and aspartate 4593 each contribute to the Mn(2+) site. In terms of domain architecture, Nsp12 Interface spans 4641-4739; the sequence is IKWDLLKYDF…HNQDVNLHSS (99 aa). The Zn(2+) site is built by histidine 4670, cysteine 4676, cysteine 4681, cysteine 4685, and cysteine 4862. Residues 4740 to 5307 enclose the Nsp12 RNA-dependent RNA polymerase domain; that stretch reads RLSFKELLVY…AMYTPHTVLQ (568 aa). Residues 4742–4956 form a rdRp Fingers N-ter region; that stretch reads SFKELLVYAA…HQKLLKSIAA (215 aa). The interval 4957-4995 is rdRp Palm N-ter; it reads TRGATVVIGTSKFYGGWHNMLKTVYSDVETPHLMGWDYP. The region spanning 4987-5149 is the RdRp catalytic domain; the sequence is PHLMGWDYPK…CYNSNYAAQG (163 aa). The tract at residues 4996-5054 is rdRp Fingers C-ter; sequence KCDRAMPNMLRIMASLVLARKHSTCCNLSHRFYRLANECAQVLSEMVMCGGSLYVKPGG. Residues histidine 5017, cysteine 5020, and cysteine 5021 each coordinate Zn(2+). Positions 5055-5190 are rdRp Palm C-ter; it reads TSSGDATTAY…TKGPHEFCSQ (136 aa). Residues serine 5134, aspartate 5135, and aspartate 5136 contribute to the active site. The interval 5191–5307 is rdRp Thumb; sequence HTMLVKQGDD…AMYTPHTVLQ (117 aa). The 113-residue stretch at 5308–5420 folds into the CV ZBD domain; sequence AVGACVLCNS…TDFNAIATCD (113 aa). Residues cysteine 5312, cysteine 5315, cysteine 5323, cysteine 5326, cysteine 5333, cysteine 5336, histidine 5340, histidine 5346, cysteine 5357, cysteine 5362, cysteine 5379, and histidine 5382 each contribute to the Zn(2+) site. Residues 5564–5745 form the (+)RNA virus helicase ATP-binding domain; it reads NISDEFSSNV…MKTIGPDMFL (182 aa). ATP is bound at residue 5589-5596; sequence GPPGTGKS. The (+)RNA virus helicase C-terminal domain maps to 5746 to 5915; the sequence is GTCRRCPAEI…TLQAENVTGL (170 aa). In terms of domain architecture, ExoN spans 5980-6195; that stretch reads MFITREEAIR…RCLAVHECFV (216 aa). Residues aspartate 5998, glutamate 6000, and glutamate 6099 contribute to the active site. Residues cysteine 6115, cysteine 6118, cysteine 6134, histidine 6137, histidine 6165, cysteine 6169, and histidine 6172 each coordinate Zn(2+). Active-site residues include histidine 6176 and aspartate 6181. Cysteine 6187 is a binding site for Zn(2+). The N7-MTase domain occupies 6204-6435; it reads YPIIGDELKI…NLWNTFTRLQ (232 aa). 6239–6245 provides a ligand contact to S-adenosyl-L-methionine; that stretch reads DIGNPKA. The tract at residues 6322–6336 is gpppA-binding; the sequence is CDGGSLYVNKHAFHT. Zn(2+) contacts are provided by cysteine 6360, cysteine 6381, cysteine 6392, and histidine 6395. One can recognise a Nsp15 N-terminal oligomerization domain in the interval 6436–6496; that stretch reads SLENVAYNVV…NVAFELWAKR (61 aa). Residues 6497–6622 enclose the AV-Nsp11N/CoV-Nsp15M domain; the sequence is NIKPVPEIKI…YFKKVDGIIQ (126 aa). One can recognise a NendoU domain in the interval 6639–6778; that stretch reads KPRSKMETDF…KDGHVETFYP (140 aa). Residues histidine 6669, histidine 6684, lysine 6724, lysine 6827, aspartate 6911, lysine 6951, and glutamate 6984 contribute to the active site. The region spanning 6783–7077 is the Nidovirus-type SAM-dependent 2'-O-MTase domain; that stretch reads SQAWQPGVAM…RVVVSSDILV (295 aa).

It belongs to the coronaviruses polyprotein 1ab family. In terms of assembly, interacts with host PHB and PHB2. Interacts with papain-like protease nsp3 and non-structural protein 6. As to quaternary structure, monomer. Homodimer. Only the homodimer shows catalytic activity. In terms of assembly, interacts with nsp8 and nsp12 to form the replication-transcription complex (RTC): nsp12, nsp7, two subunits of nsp8, and up to two subunits of nsp13. Interacts with nsp7, nsp13 and nsp12 to form the replication-transcription complex (RTC): nsp12, nsp7, two subunits of nsp8, and up to two subunits of nsp13. As to quaternary structure, interacts with nsp12. In terms of assembly, interacts with proofreading exoribonuclease nsp14 and 2'-O-methyltransferase nsp16; these interactions enhance nsp14 and nsp16 enzymatic activities. Interacts with nsp7 and nsp8 to form the replication-transcription complex (RTC): nsp12, nsp7, two subunits of nsp8, and up to two subunits of nsp13. Interacts with nsp9. As to quaternary structure, interacts with nsp8 to form the replication-transcription complex (RTC): nsp12, nsp7, two subunits of nsp8, and up to two subunits of nsp13. Requires Mn(2+) as cofactor. Mg(2+) serves as cofactor. Specific enzymatic cleavages in vivo by its own proteases yield mature proteins. 3CL-PRO and PL-PRO proteinases are autocatalytically processed.

It localises to the host membrane. It is found in the host cytoplasm. The protein resides in the host perinuclear region. The protein localises to the host endoplasmic reticulum-Golgi intermediate compartment. It catalyses the reaction RNA(n) + a ribonucleoside 5'-triphosphate = RNA(n+1) + diphosphate. It carries out the reaction ATP + H2O = ADP + phosphate + H(+). The catalysed reaction is Thiol-dependent hydrolysis of ester, thioester, amide, peptide and isopeptide bonds formed by the C-terminal Gly of ubiquitin (a 76-residue protein attached to proteins as an intracellular targeting signal).. The enzyme catalyses a 5'-end (N(7)-methyl 5'-triphosphoguanosine)-ribonucleoside in mRNA + S-adenosyl-L-methionine = a 5'-end (N(7)-methyl 5'-triphosphoguanosine)-(2'-O-methyl-ribonucleoside) in mRNA + S-adenosyl-L-homocysteine + H(+). It catalyses the reaction uridylyl-uridylyl-ribonucleotide-RNA = a 3'-end uridylyl-2',3'-cyclophospho-uridine-RNA + a 5'-end dephospho-ribonucleoside-RNA. It carries out the reaction a 5'-end diphospho-ribonucleoside in mRNA + GTP + H(+) = a 5'-end (5'-triphosphoguanosine)-ribonucleoside in mRNA + diphosphate. The catalysed reaction is a 5'-end (5'-triphosphoguanosine)-ribonucleoside in mRNA + S-adenosyl-L-methionine = a 5'-end (N(7)-methyl 5'-triphosphoguanosine)-ribonucleoside in mRNA + S-adenosyl-L-homocysteine. In terms of biological role, the replicase polyprotein of coronaviruses is a multifunctional protein: it contains the activities necessary for the transcription of negative stranded RNA, leader RNA, subgenomic mRNAs and progeny virion RNA as well as proteinases responsible for the cleavage of the polyprotein into functional products. Its function is as follows. Inhibits host translation by interacting with the 40S ribosomal subunit. The nsp1-40S ribosome complex further induces an endonucleolytic cleavage near the 5'UTR of host mRNAs, targeting them for degradation. Viral mRNAs are not susceptible to nsp1-mediated endonucleolytic RNA cleavage thanks to the presence of a 5'-end leader sequence and are therefore protected from degradation. By suppressing host gene expression, nsp1 facilitates efficient viral gene expression in infected cells and evasion from host immune response. May play a role in the modulation of host cell survival signaling pathway by interacting with host PHB and PHB2. Indeed, these two proteins play a role in maintaining the functional integrity of the mitochondria and protecting cells from various stresses. Functionally, responsible for the cleavages located at the N-terminus of the replicase polyprotein. In addition, PL-PRO possesses a deubiquitinating/deISGylating activity and processes both 'Lys-48'- and 'Lys-63'-linked polyubiquitin chains from cellular substrates. Participates together with nsp4 in the assembly of virally-induced cytoplasmic double-membrane vesicles necessary for viral replication. Antagonizes innate immune induction of type I interferon by blocking the phosphorylation, dimerization and subsequent nuclear translocation of host IRF3. Also prevents host NF-kappa-B signaling. In terms of biological role, participates in the assembly of virally-induced cytoplasmic double-membrane vesicles necessary for viral replication. Its function is as follows. Cleaves the C-terminus of replicase polyprotein at 11 sites. Recognizes substrates containing the core sequence [ILMVF]-Q-|-[SGACN]. Also able to bind an ADP-ribose-1''-phosphate (ADRP). Plays a role in the initial induction of autophagosomes from host endoplasmic reticulum. Later, limits the expansion of these phagosomes that are no longer able to deliver viral components to lysosomes. Functionally, forms a hexadecamer with nsp8 (8 subunits of each) that may participate in viral replication by acting as a primase. Alternatively, may synthesize substantially longer products than oligonucleotide primers. In terms of biological role, forms a hexadecamer with nsp7 (8 subunits of each) that may participate in viral replication by acting as a primase. Alternatively, may synthesize substantially longer products than oligonucleotide primers. Its function is as follows. Forms a primer, NSP9-pU, which is utilized by the polymerase for the initiation of RNA chains. Interacts with ribosome signal recognition particle RNA (SRP). Together with NSP8, suppress protein integration into the cell membrane, thereby disrupting host immune defenses. Plays a pivotal role in viral transcription by stimulating both nsp14 3'-5' exoribonuclease and nsp16 2'-O-methyltransferase activities. Therefore plays an essential role in viral mRNAs cap methylation. Functionally, RNA-directed RNA polymerase that catalyzes the transcription of viral genomic and subgenomic RNAs. Acts in complex with nsp7 and nsp8 to transcribe both the minus and positive strands of genomic RNA. The kinase-like NiRAN domain of NSP12 attaches one or more nucleotides to the amino terminus of NSP9, forming a covalent RNA-protein intermediate that serves as transcription/replication primer. Subgenomic RNAs (sgRNAs) are formed by discontinuous transcription: The polymerase has the ability to pause at transcription-regulating sequences (TRS) and jump to the leader TRS, resulting in a major deletion. This creates a series of subgenomic RNAs that are replicated, transcribed and translated. In addition, Nsp12 is a subunit of the viral RNA capping enzyme that catalyzes the RNA guanylyltransferase reaction for genomic and sub-genomic RNAs. Subsequently, the NiRAN domain transfers RNA to GDP, and forms the core cap structure GpppA-RNA. In terms of biological role, multi-functional protein with a zinc-binding domain in N-terminus displaying RNA and DNA duplex-unwinding activities with 5' to 3' polarity. Activity of helicase is dependent on magnesium. Its function is as follows. Plays a role in viral RNA synthesis through two distinct activities. The N7-guanine methyltransferase activity plays a role in the formation of the cap structure GpppA-RNA. The proofreading exoribonuclease reduces the sensitivity of the virus to RNA mutagens during replication. This activity acts on both ssRNA and dsRNA in a 3'-5' direction. Plays a role in viral transcription/replication and prevents the simultaneous activation of host cell dsRNA sensors, such as MDA5/IFIH1, OAS, and PKR. Acts by degrading the 5'-polyuridines generated during replication of the poly(A) region of viral genomic and subgenomic RNAs. Catalyzes a two-step reaction in which a 2'3'-cyclic phosphate (2'3'-cP) is first generated by 2'-O transesterification, which is then hydrolyzed to a 3'-phosphate (3'-P). If not degraded, poly(U) RNA would hybridize with poly(A) RNA tails and activate host dsRNA sensors. Functionally, methyltransferase that mediates mRNA cap 2'-O-ribose methylation to the 5'-cap structure of viral mRNAs. N7-methyl guanosine cap is a prerequisite for binding of nsp16. Therefore plays an essential role in viral mRNAs cap methylation which is essential to evade immune system. The chain is Replicase polyprotein 1ab (rep) from Bat coronavirus 279/2005 (BtCoV).